A 329-amino-acid chain; its full sequence is MLSSLNVLQSSFRGKTALSNSTLLQKVSFAGKEYSLEPIDERTPILFQWFEARPERYEKGEVPILNTKEHPYLSNIINAAKIENERIIGVLVDGNFTYEQKKEFLNLENEHQNIKIIYRADVDFSMYDKKLSDIYLENIHKQESYPASERDNYLLGLLREELKNIPEGKDSLIESYAEKREHTWFDFFRNLAILKAGSLFTETGKTGCHNISPCSGCIYLDADMIITDKLGVLYAPDGIAVHVDCNDEIKSLENGAIVVNRSNHPALLAGLDIMKSKVDAHPYYDGLGKGIKRHFNYSSLHNYNAFCDFIEFKHENIIPNTSMYTSSSW.

Arg13 carries N-beta-linked (GlcNAc) arginine; by autocatalysis glycosylation. 48–50 (QWF) provides a ligand contact to UDP-N-acetyl-alpha-D-glucosamine. An N-beta-linked (GlcNAc) arginine; by autocatalysis glycan is attached at Arg53. Tyr72 contacts UDP-N-acetyl-alpha-D-glucosamine. Arg159 carries an N-beta-linked (GlcNAc) arginine; by autocatalysis glycan. 219-222 (YLDA) serves as a coordination point for UDP-N-acetyl-alpha-D-glucosamine. The short motif at 221–223 (DAD) is the DXD motif element. Asp223 contributes to the Mn(2+) binding site. Glu253 functions as the Proton acceptor in the catalytic mechanism. Arg293 carries an N-beta-linked (GlcNAc) arginine; by autocatalysis glycan. The Mn(2+) site is built by Asn320 and Ser322. UDP-N-acetyl-alpha-D-glucosamine contacts are provided by residues Ser322 and 327-329 (SSW).

This sequence belongs to the glycosyltransferase NleB family. It depends on Mn(2+) as a cofactor. In terms of processing, auto-glycosylated: arginine GlcNAcylation is required for activity toward death domain-containing host target proteins.

Its subcellular location is the secreted. The protein resides in the host cytoplasm. The enzyme catalyses L-arginyl-[protein] + UDP-N-acetyl-alpha-D-glucosamine = N(omega)-(N-acetyl-beta-D-glucosaminyl)-L-arginyl-[protein] + UDP + H(+). In terms of biological role, protein-arginine N-acetylglucosaminyltransferase effector that disrupts TNF signaling in infected cells, including NF-kappa-B signaling, apoptosis and necroptosis. Acts by catalyzing the transfer of a single N-acetylglucosamine (GlcNAc) to a conserved arginine residue in the death domain of host proteins FADD, TRADD, FAS, TNFRSF1A/TNFR1, TNFRSF25/DR3 and RIPK1: arginine GlcNAcylation prevents homotypic/heterotypic death domain interactions and assembly of the oligomeric TNF-alpha receptor complex, thereby disrupting TNF signaling. Has preference for host FADD as substrate compared to other death domain-containing proteins. Also acts on host proteins without a death domain: catalyzes arginine GlcNAcylation of HIF1A, thereby regulating host glucose metabolism. Also displays intra-bacterial activity by mediating GlcNAcylation of glutathione synthetase GshB. Catalyzes auto-GlcNAcylation, which is required for activity toward death domain-containing host target proteins. Shows a higher enzymatic activity than NleB2. The polypeptide is Protein-arginine N-acetylglucosaminyltransferase NleB1 (Escherichia coli O127:H6 (strain E2348/69 / EPEC)).